Consider the following 816-residue polypeptide: Lon protease (816 aa).

The 205-residue stretch at 40–244 (VPLIAVPSHP…KVLELLYEEL (205 aa)) folds into the Lon N-terminal domain. 398–405 (GPPGVGKT) lines the ATP pocket. The Lon proteolytic domain occupies 636–816 (AMSPGMVMGL…SMKEVIKLLF (181 aa)). Catalysis depends on residues Ser724 and Lys767.

The protein belongs to the peptidase S16 family. In terms of assembly, homohexamer. Organized in a ring with a central cavity.

It is found in the cytoplasm. It catalyses the reaction Hydrolysis of proteins in presence of ATP.. ATP-dependent serine protease that mediates the selective degradation of mutant and abnormal proteins as well as certain short-lived regulatory proteins. Required for cellular homeostasis and for survival from DNA damage and developmental changes induced by stress. Degrades polypeptides processively to yield small peptide fragments that are 5 to 10 amino acids long. Binds to DNA in a double-stranded, site-specific manner. The protein is Lon protease of Borrelia duttonii (strain Ly).